Consider the following 137-residue polypeptide: Protein ApaG (137 aa).

In terms of domain architecture, ApaG spans proline 2–glutamine 126.

The chain is Protein ApaG from Acidovorax sp. (strain JS42).